Here is a 341-residue protein sequence, read N- to C-terminus: L-threonine 3-dehydrogenase (341 aa).

Cys-38 contacts Zn(2+). Active-site charge relay system residues include Thr-40 and His-43. Zn(2+) contacts are provided by His-63, Glu-64, Cys-93, Cys-96, Cys-99, and Cys-107. NAD(+) contacts are provided by residues Ile-175, Asp-195, Arg-200, Leu-262–Ile-264, and Ile-286–Tyr-287.

This sequence belongs to the zinc-containing alcohol dehydrogenase family. Homotetramer. Zn(2+) serves as cofactor.

The protein resides in the cytoplasm. The enzyme catalyses L-threonine + NAD(+) = (2S)-2-amino-3-oxobutanoate + NADH + H(+). The protein operates within amino-acid degradation; L-threonine degradation via oxydo-reductase pathway; glycine from L-threonine: step 1/2. Catalyzes the NAD(+)-dependent oxidation of L-threonine to 2-amino-3-ketobutyrate. In Yersinia pestis bv. Antiqua (strain Antiqua), this protein is L-threonine 3-dehydrogenase.